A 498-amino-acid polypeptide reads, in one-letter code: WD repeat-containing protein 55 homolog (498 aa).

Residues 1 to 131 form a disordered region; sequence MHTHNNFKTP…ATFDLDEDDE (131 aa). 2 stretches are compositionally biased toward acidic residues: residues 12-23 and 31-48; these read DEDELDDLDEDM and IEQEVLNESDSDNDEYDL. WD repeat units lie at residues 154 to 193, 198 to 237, 241 to 279, 282 to 321, 324 to 363, and 408 to 447; these read KLEDFITDICFHPDRDIIALATIIGDVHLYEYDNEANKLL, VHSKACRDVEFTEDGRFLLTCSKDKCVMVTDMETEKLKKL, AHDDAINTLHVLNENLFASGDDAGTVKLWDLRTKNAIFE, ELEDQITQLTTNEQSKLLLATSADGYLTTFNISARKMYVQ, PYEEELNCMGVYRGDSKLVVGTSKGRLYTYNWGQFGYHCD, and QHNMPIESLDVNASGELIASSSHNNDVRFWNVKYFEDFGE.

This sequence belongs to the WD repeat WDR55 family.

The protein is WD repeat-containing protein 55 homolog of Drosophila simulans (Fruit fly).